The chain runs to 327 residues: ATP-dependent 6-phosphofructokinase (327 aa).

ATP is bound at residue Gly-12. ADP is bound by residues 22–26 (RGVVR) and 55–60 (RYSVSD). ATP is bound by residues 73 to 74 (RF) and 103 to 106 (GDGS). Position 104 (Asp-104) interacts with Mg(2+). 127–129 (TID) serves as a coordination point for substrate. The active-site Proton acceptor is Asp-129. Arg-156 is an ADP binding site. Substrate is bound by residues Arg-164 and 171 to 173 (MGR). Residues 187-189 (GCE), Lys-213, and 215-217 (KKH) contribute to the ADP site. Substrate contacts are provided by residues Glu-224, Arg-245, and 251–254 (HIQR).

The protein belongs to the phosphofructokinase type A (PFKA) family. ATP-dependent PFK group I subfamily. Prokaryotic clade 'B1' sub-subfamily. In terms of assembly, homotetramer. Mg(2+) serves as cofactor.

Its subcellular location is the cytoplasm. The catalysed reaction is beta-D-fructose 6-phosphate + ATP = beta-D-fructose 1,6-bisphosphate + ADP + H(+). Its pathway is carbohydrate degradation; glycolysis; D-glyceraldehyde 3-phosphate and glycerone phosphate from D-glucose: step 3/4. Allosterically activated by ADP and other diphosphonucleosides, and allosterically inhibited by phosphoenolpyruvate. Functionally, catalyzes the phosphorylation of D-fructose 6-phosphate to fructose 1,6-bisphosphate by ATP, the first committing step of glycolysis. The chain is ATP-dependent 6-phosphofructokinase from Hamiltonella defensa subsp. Acyrthosiphon pisum (strain 5AT).